Consider the following 253-residue polypeptide: Transcriptional regulatory protein TcrA (253 aa).

The Response regulatory domain occupies 24-138; it reads RILVVEDEPK…ELFARLRALS (115 aa). Aspartate 73 carries the post-translational modification 4-aspartylphosphate. The ompR/PhoB-type DNA-binding region spans 146–244; sequence PPTLEAGDLR…IRGAGYRLRK (99 aa).

As to quaternary structure, interacts with HK2. In terms of processing, phosphorylated by HK2.

The protein localises to the cytoplasm. In terms of biological role, member of the three-protein two-component system HK1/HK2/TcrA. The polypeptide is Transcriptional regulatory protein TcrA (tcrA) (Mycobacterium tuberculosis (strain ATCC 25618 / H37Rv)).